The sequence spans 347 residues: Phosphoribosylformylglycinamidine cyclo-ligase (347 aa).

Belongs to the AIR synthase family.

Its subcellular location is the cytoplasm. The enzyme catalyses 2-formamido-N(1)-(5-O-phospho-beta-D-ribosyl)acetamidine + ATP = 5-amino-1-(5-phospho-beta-D-ribosyl)imidazole + ADP + phosphate + H(+). It participates in purine metabolism; IMP biosynthesis via de novo pathway; 5-amino-1-(5-phospho-D-ribosyl)imidazole from N(2)-formyl-N(1)-(5-phospho-D-ribosyl)glycinamide: step 2/2. This Yersinia enterocolitica serotype O:8 / biotype 1B (strain NCTC 13174 / 8081) protein is Phosphoribosylformylglycinamidine cyclo-ligase.